Here is a 336-residue protein sequence, read N- to C-terminus: Ventral anterior homeobox 1 (336 aa).

Positions 1–34 (MFGKTDKMDVRCHSDTEAARVSKNAHKESREIKG) are enriched in basic and acidic residues. Disordered stretches follow at residues 1 to 39 (MFGK…EGSL) and 50 to 69 (AFSA…NSSA). The homeobox DNA-binding region spans 100–159 (PKRTRTSFTAEQLYRLEMEFQRCQYVVGRERTELARQLNLSETQVKVWFQNRRTKQKKDQ). Positions 236–250 (PGPAGAASQHPPAVG) are enriched in low complexity. Disordered regions lie at residues 236–267 (PGPA…HAGA) and 316–336 (SAFE…KALD). Positions 325–336 (NNKEGAEKKALD) are enriched in basic and acidic residues.

The protein belongs to the EMX homeobox family.

It localises to the nucleus. In terms of biological role, transcription factor that may function in dorsoventral specification of the forebrain. Required for axon guidance and major tract formation in the developing forebrain. May contribute to the differentiation of the neuroretina, pigmented epithelium and optic stalk. In Rattus norvegicus (Rat), this protein is Ventral anterior homeobox 1 (Vax1).